A 2311-amino-acid polypeptide reads, in one-letter code: Proto-oncogene tyrosine-protein kinase ROS (2311 aa).

Residues 1–24 (MRNACLLLNRLGAFYFIWISAAYC) form the signal peptide. Residues 25 to 1873 (SFSKNCQDLC…LAKDTVTSPD (1849 aa)) are Extracellular-facing. Asn49, Asn65, Asn77, Asn123, Asn132, Asn265, Asn287, Asn307, Asn333, Asn377, Asn405, Asn480, Asn607, Asn628, Asn706, Asn714, Asn911, Asn940, Asn962, Asn971, Asn1110, Asn1154, Asn1180, Asn1233, Asn1255, Asn1282, Asn1316, Asn1470, Asn1509, Asn1588, Asn1628, Asn1682, Asn1696, and Asn1730 each carry an N-linked (GlcNAc...) asparagine glycan. Fibronectin type-III domains follow at residues 110-202 (KPGA…ASGV) and 203-294 (PTTA…PESK). Residues 571-671 (LPTLPRLVTV…EPFRGMTFEE (101 aa)) form the Fibronectin type-III 3 domain. Fibronectin type-III domains lie at 952-1047 (VPES…APEG) and 1051-1158 (APAN…SSDI). 4 Fibronectin type-III domains span residues 1459 to 1569 (DTEK…TLYG), 1570 to 1669 (VPEG…AKTF), 1671 to 1766 (TPLS…TTAG), and 1767 to 1868 (VPSK…AKDT). The span at 1754 to 1764 (STSSPTSFKTT) shows a compositional bias: low complexity. The tract at residues 1754–1786 (STSSPTSFKTTAGVPSKPGTPKRAEDSKNSVQW) is disordered. The segment covering 1775 to 1786 (KRAEDSKNSVQW) has biased composition (basic and acidic residues). N-linked (GlcNAc...) asparagine glycans are attached at residues Asn1792, Asn1795, and Asn1822. The chain crosses the membrane as a helical span at residues 1874–1898 (ITAIVAVIGAVVLGLTIIILFGFVW). Residues 1899 to 2311 (HQRWKSRKPA…SISSAELTSV (413 aa)) lie on the Cytoplasmic side of the membrane. Residues 1961-2240 (LNLHKLLGSG…KLQEIRHSPL (280 aa)) enclose the Protein kinase domain. ATP is bound by residues 1967 to 1975 (LGSGAFGEV) and Lys1996. Asp2095 functions as the Proton acceptor in the catalytic mechanism. Tyr2131 is modified (phosphotyrosine; by autocatalysis).

Belongs to the protein kinase superfamily. Tyr protein kinase family. Insulin receptor subfamily. As to quaternary structure, interacts with VAV3; constitutive interaction mediating VAV3 phosphorylation. Highest expression in kidney. Also expressed in gonad, thymus, bursa, brain and kidney.

The protein resides in the cell membrane. It catalyses the reaction L-tyrosyl-[protein] + ATP = O-phospho-L-tyrosyl-[protein] + ADP + H(+). Its function is as follows. Orphan receptor tyrosine kinase (RTK) that may activate several downstream signaling pathways related to cell differentiation, proliferation, growth and survival including the PI3 kinase-mTOR signaling pathway. Mediates the phosphorylation of PTPN11, an activator of this pathway. May also phosphorylate and activate the transcription factor STAT3 to control anchorage-independent cell growth. Mediates the phosphorylation and the activation of VAV3, a guanine nucleotide exchange factor regulating cell morphology. May activate other downstream signaling proteins including AKT1, MAPK1, MAPK3, IRS1, and PLCG2. The protein is Proto-oncogene tyrosine-protein kinase ROS (ROS1) of Gallus gallus (Chicken).